The sequence spans 149 residues: MNKMTNNKTIWMKPRYVKKKWYVIDASDKVLGRIATEAIKILRGKHKPYYTPHQDLGDNVVIINASKVKLTGKKYFQKIYYRHSRYPGGLYSDTYRTLSERKPTAPLEIAIKGMLPKGPLGRELFRNLKVFADANHKLSSQNLYKLEAN.

This sequence belongs to the universal ribosomal protein uL13 family. As to quaternary structure, part of the 50S ribosomal subunit.

In terms of biological role, this protein is one of the early assembly proteins of the 50S ribosomal subunit, although it is not seen to bind rRNA by itself. It is important during the early stages of 50S assembly. The polypeptide is Large ribosomal subunit protein uL13 (Borrelia recurrentis (strain A1)).